Here is a 466-residue protein sequence, read N- to C-terminus: Probable Xaa-Pro aminopeptidase pepP (466 aa).

Residues aspartate 264, aspartate 275, glutamate 398, and glutamate 438 each coordinate Mn(2+).

The protein belongs to the peptidase M24B family. Requires Mn(2+) as cofactor.

It carries out the reaction Release of any N-terminal amino acid, including proline, that is linked to proline, even from a dipeptide or tripeptide.. Its function is as follows. Catalyzes the removal of a penultimate prolyl residue from the N-termini of peptides. This chain is Probable Xaa-Pro aminopeptidase pepP (pepP), found in Aspergillus niger (strain ATCC MYA-4892 / CBS 513.88 / FGSC A1513).